The sequence spans 21 residues: S-layer protein 2 (21 aa).

Its subcellular location is the secreted. The protein localises to the cell wall. The protein resides in the S-layer. In terms of biological role, the S-layer is a paracrystalline mono-layered assembly of proteins which coat the surface of bacteria. The sequence is that of S-layer protein 2 from Bacillus thuringiensis subsp. konkukian.